The sequence spans 416 residues: Gamma-glutamyl phosphate reductase (416 aa).

Belongs to the gamma-glutamyl phosphate reductase family.

Its subcellular location is the cytoplasm. The enzyme catalyses L-glutamate 5-semialdehyde + phosphate + NADP(+) = L-glutamyl 5-phosphate + NADPH + H(+). It participates in amino-acid biosynthesis; L-proline biosynthesis; L-glutamate 5-semialdehyde from L-glutamate: step 2/2. Its function is as follows. Catalyzes the NADPH-dependent reduction of L-glutamate 5-phosphate into L-glutamate 5-semialdehyde and phosphate. The product spontaneously undergoes cyclization to form 1-pyrroline-5-carboxylate. This chain is Gamma-glutamyl phosphate reductase, found in Actinobacillus succinogenes (strain ATCC 55618 / DSM 22257 / CCUG 43843 / 130Z).